The primary structure comprises 302 residues: Glycine--tRNA ligase alpha subunit (302 aa).

The protein belongs to the class-II aminoacyl-tRNA synthetase family. As to quaternary structure, tetramer of two alpha and two beta subunits.

Its subcellular location is the cytoplasm. It catalyses the reaction tRNA(Gly) + glycine + ATP = glycyl-tRNA(Gly) + AMP + diphosphate. This Xanthomonas oryzae pv. oryzae (strain PXO99A) protein is Glycine--tRNA ligase alpha subunit.